A 153-amino-acid chain; its full sequence is Nucleoside diphosphate kinase (153 aa).

ATP contacts are provided by K12, F60, R88, T94, R105, and N115. The Pros-phosphohistidine intermediate role is filled by H118.

It belongs to the NDK family. Requires Mg(2+) as cofactor.

The protein resides in the cytoplasm. It carries out the reaction a 2'-deoxyribonucleoside 5'-diphosphate + ATP = a 2'-deoxyribonucleoside 5'-triphosphate + ADP. It catalyses the reaction a ribonucleoside 5'-diphosphate + ATP = a ribonucleoside 5'-triphosphate + ADP. Functionally, major role in the synthesis of nucleoside triphosphates other than ATP. The ATP gamma phosphate is transferred to the NDP beta phosphate via a ping-pong mechanism, using a phosphorylated active-site intermediate. This is Nucleoside diphosphate kinase from Natronomonas pharaonis (strain ATCC 35678 / DSM 2160 / CIP 103997 / JCM 8858 / NBRC 14720 / NCIMB 2260 / Gabara) (Halobacterium pharaonis).